We begin with the raw amino-acid sequence, 203 residues long: Large ribosomal subunit protein bL25 (203 aa).

This sequence belongs to the bacterial ribosomal protein bL25 family. CTC subfamily. In terms of assembly, part of the 50S ribosomal subunit; part of the 5S rRNA/L5/L18/L25 subcomplex. Contacts the 5S rRNA. Binds to the 5S rRNA independently of L5 and L18.

In terms of biological role, this is one of the proteins that binds to the 5S RNA in the ribosome where it forms part of the central protuberance. The polypeptide is Large ribosomal subunit protein bL25 (Rickettsia peacockii (strain Rustic)).